The chain runs to 219 residues: Large ribosomal subunit protein uL16 (219 aa).

This sequence belongs to the universal ribosomal protein uL16 family. As to quaternary structure, component of the small ribosomal subunit. Mature ribosomes consist of a small (40S) and a large (60S) subunit. The 40S subunit contains about 33 different proteins and 1 molecule of RNA (18S). The 60S subunit contains about 49 different proteins and 3 molecules of RNA (25S, 5.8S and 5S).

This Encephalitozoon cuniculi (strain GB-M1) (Microsporidian parasite) protein is Large ribosomal subunit protein uL16 (RPL10).